We begin with the raw amino-acid sequence, 712 residues long: Polyribonucleotide nucleotidyltransferase (712 aa).

Residues D487 and D493 each contribute to the Mg(2+) site. Positions 554-613 (PRIHTMKISVEKIKDVIGKGGAVIRQLTEETGTTIEIEDDGTIKIAATDGDQAKEAIRRI) constitute a KH domain. Residues 623-691 (GVIYTGKVAR…RQGRVRLSMK (69 aa)) enclose the S1 motif domain.

This sequence belongs to the polyribonucleotide nucleotidyltransferase family. As to quaternary structure, component of the RNA degradosome, which is a multiprotein complex involved in RNA processing and mRNA degradation. The cofactor is Mg(2+).

The protein localises to the cytoplasm. The catalysed reaction is RNA(n+1) + phosphate = RNA(n) + a ribonucleoside 5'-diphosphate. Involved in mRNA degradation. Catalyzes the phosphorolysis of single-stranded polyribonucleotides processively in the 3'- to 5'-direction. In Vibrio cholerae serotype O1 (strain ATCC 39541 / Classical Ogawa 395 / O395), this protein is Polyribonucleotide nucleotidyltransferase.